The chain runs to 837 residues: Protein translocase subunit SecA 1 (837 aa).

Residues Q85, 103–107 (GEGKT), and D492 each bind ATP. The span at 787-806 (QEVAKGEAVHPKEDGEEPKR) shows a compositional bias: basic and acidic residues. The interval 787-811 (QEVAKGEAVHPKEDGEEPKRKPVRK) is disordered. Positions 821, 823, 832, and 833 each coordinate Zn(2+).

The protein belongs to the SecA family. As to quaternary structure, monomer and homodimer. Part of the essential Sec protein translocation apparatus which comprises SecA, SecYEG and auxiliary proteins SecDF. Other proteins may also be involved. The cofactor is Zn(2+).

The protein resides in the cell membrane. It localises to the cytoplasm. It carries out the reaction ATP + H2O + cellular proteinSide 1 = ADP + phosphate + cellular proteinSide 2.. Its function is as follows. Part of the Sec protein translocase complex. Interacts with the SecYEG preprotein conducting channel. Has a central role in coupling the hydrolysis of ATP to the transfer of proteins into and across the cell membrane, serving as an ATP-driven molecular motor driving the stepwise translocation of polypeptide chains across the membrane. The chain is Protein translocase subunit SecA 1 from Geobacillus kaustophilus (strain HTA426).